The following is a 1079-amino-acid chain: Lon protease homolog, mitochondrial (1079 aa).

A mitochondrion-targeting transit peptide spans 1 to 60 (MLRPRTYVRKLAWRCPRKSQLGLRLATSVSSHKSLPLPMNFDISHSQSAFRAYQDIIHRN). Basic and acidic residues predominate over residues 61–116 (KSVGDDEPSQRSENENNPSESDKDSNQDPETPKKDKESENDKEPEKEKDIENDNKV). Disordered stretches follow at residues 61-158 (KSVG…VDPV) and 262-285 (LTTP…ESFP). Residues 117 to 131 (SSESNENVTLASSNT) are compositionally biased toward polar residues. Positions 132-143 (GGAAPPNGNNNG) are enriched in low complexity. The Lon N-terminal domain maps to 165–391 (LLAIPMKDRP…RALELLKVEL (227 aa)). Residues 262–281 (LTTPSSEKEAKSEEPSKEDA) show a composition bias toward basic and acidic residues. 543–550 (GPPGTGKT) is a binding site for ATP. Basic and acidic residues predominate over residues 756–765 (ALDSSKEKEG). A disordered region spans residues 756–832 (ALDSSKEKEG…SEEDQQPEPK (77 aa)). Residues 768–779 (ASSEEANVNSES) show a composition bias toward low complexity. The span at 780 to 802 (TKSNTSQAEPVAESSTDISTKSK) shows a compositional bias: polar residues. The span at 803–818 (VASEKIETKEKKETNK) shows a compositional bias: basic and acidic residues. One can recognise a Lon proteolytic domain in the interval 865–1053 (FPPPGVATGL…QEVFDKIFPN (189 aa)). Active-site residues include Ser959 and Lys1002.

The protein belongs to the peptidase S16 family. As to quaternary structure, homohexamer or homoheptamer. Organized in a ring with a central cavity.

Its subcellular location is the mitochondrion matrix. The enzyme catalyses Hydrolysis of proteins in presence of ATP.. Functionally, ATP-dependent serine protease that mediates the selective degradation of misfolded, unassembled or oxidatively damaged polypeptides as well as certain short-lived regulatory proteins in the mitochondrial matrix. May also have a chaperone function in the assembly of inner membrane protein complexes. Participates in the regulation of mitochondrial gene expression and in the maintenance of the integrity of the mitochondrial genome. Binds to mitochondrial DNA in a site-specific manner. This is Lon protease homolog, mitochondrial from Debaryomyces hansenii (strain ATCC 36239 / CBS 767 / BCRC 21394 / JCM 1990 / NBRC 0083 / IGC 2968) (Yeast).